The chain runs to 232 residues: Small ribosomal subunit protein uS3 (232 aa).

The KH type-2 domain occupies 39–107 (IRAFLKKKLY…EVNVNIKEER (69 aa)). Residues 212 to 232 (VQPEKTEDDAPKKTRRPRRGK) form a disordered region. Basic and acidic residues predominate over residues 213–223 (QPEKTEDDAPK).

Belongs to the universal ribosomal protein uS3 family. In terms of assembly, part of the 30S ribosomal subunit. Forms a tight complex with proteins S10 and S14.

Its function is as follows. Binds the lower part of the 30S subunit head. Binds mRNA in the 70S ribosome, positioning it for translation. This chain is Small ribosomal subunit protein uS3, found in Campylobacter curvus (strain 525.92).